Consider the following 376-residue polypeptide: Chaperone protein DnaJ (376 aa).

In terms of domain architecture, J spans 5-70 (DYYEVLGVAK…QKRAAYDQYG (66 aa)). The segment at 136 to 214 (GYDTQIRVPS…CHGSGKVKET (79 aa)) adopts a CR-type zinc-finger fold. Zn(2+) is bound by residues Cys149, Cys152, Cys166, Cys169, Cys188, Cys191, Cys202, and Cys205. CXXCXGXG motif repeat units lie at residues 149–156 (CGVCHGSG), 166–173 (CPTCHGQG), 188–195 (CPKCHGTG), and 202–209 (CAHCHGSG).

The protein belongs to the DnaJ family. Homodimer. It depends on Zn(2+) as a cofactor.

It localises to the cytoplasm. Participates actively in the response to hyperosmotic and heat shock by preventing the aggregation of stress-denatured proteins and by disaggregating proteins, also in an autonomous, DnaK-independent fashion. Unfolded proteins bind initially to DnaJ; upon interaction with the DnaJ-bound protein, DnaK hydrolyzes its bound ATP, resulting in the formation of a stable complex. GrpE releases ADP from DnaK; ATP binding to DnaK triggers the release of the substrate protein, thus completing the reaction cycle. Several rounds of ATP-dependent interactions between DnaJ, DnaK and GrpE are required for fully efficient folding. Also involved, together with DnaK and GrpE, in the DNA replication of plasmids through activation of initiation proteins. This chain is Chaperone protein DnaJ, found in Burkholderia mallei (strain NCTC 10229).